The chain runs to 517 residues: Ubiquitin carboxyl-terminal hydrolase 30 (517 aa).

Topologically, residues 1–35 are mitochondrial intermembrane; that stretch reads MLSSRAQAARTAADKALQRFLRTGAAVRYKVMKNW. Residues 36-56 form a helical membrane-spanning segment; sequence GVIGGIAAALAAGIYVIWGPI. The Cytoplasmic portion of the chain corresponds to 57 to 517; the sequence is TERKKRRKGL…QQGREYRSEE (461 aa). The 435-residue stretch at 68–502 folds into the USP domain; sequence PGLVNLGNTC…SAYLLFYERV (435 aa). The active-site Nucleophile is Cys77. Residues Lys235 and Lys289 each participate in a glycyl lysine isopeptide (Lys-Gly) (interchain with G-Cter in ubiquitin) cross-link. Residues 364–395 form a disordered region; the sequence is SQHGPKATESPGSALGVQDTQAAPKPGLSQPA. The active-site Proton acceptor is His452.

This sequence belongs to the peptidase C19 family. In terms of processing, ubiquitinated by parkin (PRKN) at Lys-235 and Lys-289, leading to its degradation.

The protein localises to the mitochondrion outer membrane. It catalyses the reaction Thiol-dependent hydrolysis of ester, thioester, amide, peptide and isopeptide bonds formed by the C-terminal Gly of ubiquitin (a 76-residue protein attached to proteins as an intracellular targeting signal).. Inhibited by the diterpenoid derivative 15-oxospiramilactone (S3). Functionally, deubiquitinating enzyme tethered to the mitochondrial outer membrane that acts as a key inhibitor of mitophagy by counteracting the action of parkin (PRKN): hydrolyzes ubiquitin attached by parkin on target proteins, such as RHOT1/MIRO1 and TOMM20, thereby blocking parkin's ability to drive mitophagy. Preferentially cleaves 'Lys-6'- and 'Lys-11'-linked polyubiquitin chains, 2 types of linkage that participate in mitophagic signaling. Does not cleave efficiently polyubiquitin phosphorylated at 'Ser-65'. Acts as a negative regulator of mitochondrial fusion by mediating deubiquitination of MFN1 and MFN2. The polypeptide is Ubiquitin carboxyl-terminal hydrolase 30 (Usp30) (Rattus norvegicus (Rat)).